Reading from the N-terminus, the 292-residue chain is MKNLTGIFSALLVAFNEDGSINEQGLRQIIRHNIDKMKVDGLYVGGSTGENFMLSTAEKKEIFRIAKDEAKDQIALIAQVGSVNLQEAVELGKYATELGYDCLSAVTPFYYKFSFAEIKHYYDTIIAETGNNMIVYSIPFLTGVNIGVEQFGELYKNPKILGVKFTAGDFYLLERLKKAYPNHLIWAGFDEMMLPAVALGVDGAIGSTFNVNTPRARQIFELTKQGKLAEALAVQHVTNDLIEGILANGLYLTIKELLKLQGVEAGYCREPMTAKATDKQLEVAKALYAKFL.

S47 and T48 together coordinate aceneuramate. The active-site Proton donor is the Y136. K164 serves as the catalytic Schiff-base intermediate with substrate. Aceneuramate contacts are provided by T166, G188, D190, E191, and S207.

Belongs to the DapA family. NanA subfamily. As to quaternary structure, homotetramer.

Its subcellular location is the cytoplasm. It carries out the reaction aceneuramate = aldehydo-N-acetyl-D-mannosamine + pyruvate. The protein operates within amino-sugar metabolism; N-acetylneuraminate degradation; D-fructose 6-phosphate from N-acetylneuraminate: step 1/5. Catalyzes the reversible aldol cleavage of N-acetylneuraminic acid (sialic acid; Neu5Ac) to form pyruvate and N-acetylmannosamine (ManNAc) via a Schiff base intermediate. The sequence is that of N-acetylneuraminate lyase from Actinobacillus pleuropneumoniae serotype 3 (strain JL03).